The primary structure comprises 925 residues: GPI ethanolamine phosphate transferase 1 (925 aa).

The Cytoplasmic portion of the chain corresponds to methionine 1–arginine 6. The helical transmembrane segment at leucine 7–isoleucine 27 threads the bilayer. Residues tyrosine 28–serine 457 are Lumenal-facing. Residues asparagine 90, asparagine 138, asparagine 198, asparagine 286, asparagine 312, and asparagine 358 are each glycosylated (N-linked (GlcNAc...) asparagine). Residues isoleucine 458 to phenylalanine 478 form a helical membrane-spanning segment. Topologically, residues isoleucine 479–asparagine 492 are cytoplasmic. A helical transmembrane segment spans residues leucine 493–glutamine 510. Residues arginine 511–tyrosine 516 are Lumenal-facing. A helical membrane pass occupies residues tyrosine 517–leucine 537. At histidine 538–glycine 547 the chain is on the cytoplasmic side. A helical transmembrane segment spans residues valine 548–valine 568. The Lumenal segment spans residues tyrosine 569–arginine 574. Residues tryptophan 575–aspartate 595 form a helical membrane-spanning segment. Over alanine 596–asparagine 599 the chain is Cytoplasmic. The helical transmembrane segment at methionine 600 to isoleucine 620 threads the bilayer. Position 621 (glutamate 621) is a topological domain, lumenal. The helical transmembrane segment at serine 622 to tryptophan 642 threads the bilayer. The Cytoplasmic portion of the chain corresponds to arginine 643–lysine 653. The helical transmembrane segment at isoleucine 654 to valine 674 threads the bilayer. Residues threonine 675–alanine 687 are Lumenal-facing. Residues lysine 688–leucine 708 form a helical membrane-spanning segment. Residues lysine 709 to leucine 719 lie on the Cytoplasmic side of the membrane. A helical transmembrane segment spans residues valine 720–phenylalanine 740. Topologically, residues tyrosine 741–arginine 775 are lumenal. A helical transmembrane segment spans residues isoleucine 776–serine 796. Topologically, residues isoleucine 797–glycine 818 are cytoplasmic. A helical transmembrane segment spans residues alanine 819–methionine 839. Residues asparagine 840–tyrosine 848 are Lumenal-facing. The helical transmembrane segment at threonine 849–leucine 869 threads the bilayer. The Cytoplasmic segment spans residues arginine 870–tyrosine 885. The chain crosses the membrane as a helical span at residues cysteine 886–leucine 906. Topologically, residues lysine 907–histidine 925 are lumenal.

Belongs to the PIGG/PIGN/PIGO family. PIGN subfamily.

It is found in the endoplasmic reticulum membrane. Its pathway is glycolipid biosynthesis; glycosylphosphatidylinositol-anchor biosynthesis. Its function is as follows. Ethanolamine phosphate transferase involved in glycosylphosphatidylinositol-anchor biosynthesis. Transfers ethanolamine phosphate to the first alpha-1,4-linked mannose of the glycosylphosphatidylinositol precursor of GPI-anchor. This chain is GPI ethanolamine phosphate transferase 1 (MCD4), found in Eremothecium gossypii (strain ATCC 10895 / CBS 109.51 / FGSC 9923 / NRRL Y-1056) (Yeast).